The following is a 470-amino-acid chain: Acyltransferase BOA11 (470 aa).

Histidine 156 functions as the Proton acceptor in the catalytic mechanism.

Belongs to the plant acyltransferase family.

It functions in the pathway polyketide biosynthesis. Functionally, acyltransferase; part of the gene cluster B that mediates the biosynthesis of botcinic acid and its botcinin derivatives, acetate-derived polyketides that contribute to virulence when combined with the sesquiterpene botrydial. Botcinic acid and its derivatives have been shown to induce chlorosis and necrosis during host plant infection, but also have antifungal activities. Two polyketide synthases, BOA6 and BOA9, are involved in the biosynthesis of botcinins. BOA6 mediates the formation of the per-methylated tetraketide core by condensation of four units of malonyl-CoA with one unit of acetyl-CoA, which would be methylated in activated methylene groups to yield a bicyclic acid intermediate that could then either be converted to botrylactone derivatives or lose the starter acetate unit through a retro-Claisen type C-C bond cleavage to yield botcinin derivatives. The second polyketide synthase, BOA9, is probably required for the biosynthesis of the tetraketide side chain of botcinins. The methyltransferase (MT) domain within BOA6 is probably responsible for the incorporation of four methyl groups. The trans-enoyl reductase BOA5 might take over the enoyl reductase function of BOA6 that misses an ER domain. The monooxygenases BOA2, BOA3 and BOA4 might be involved in further hydroxylations at C4, C5 and C8, whereas BOA7, close to BOA9, could potentially be involved in the hydroxylation at C4 in the side chain of botcinins. The chain is Acyltransferase BOA11 from Botryotinia fuckeliana (strain B05.10) (Noble rot fungus).